The following is a 207-amino-acid chain: dTTP/UTP pyrophosphatase (207 aa).

D86 acts as the Proton acceptor in catalysis.

Belongs to the Maf family. YhdE subfamily. Requires a divalent metal cation as cofactor.

Its subcellular location is the cytoplasm. The enzyme catalyses dTTP + H2O = dTMP + diphosphate + H(+). The catalysed reaction is UTP + H2O = UMP + diphosphate + H(+). Its function is as follows. Nucleoside triphosphate pyrophosphatase that hydrolyzes dTTP and UTP. May have a dual role in cell division arrest and in preventing the incorporation of modified nucleotides into cellular nucleic acids. The sequence is that of dTTP/UTP pyrophosphatase from Nitrosospira multiformis (strain ATCC 25196 / NCIMB 11849 / C 71).